We begin with the raw amino-acid sequence, 618 residues long: MSKNSGLPSFASTEADNSQGFVLSVSGPVVIANQLAGAAMYELVRVGHNQLVGEIIRLEEDTATIQVYEETSGLTVGDPVLRTHKPLTVELGPGIMNNIFDGIQRPLNAIAEITKGIYIPRGINTPSLNRTIKWPYQPDTKLKVGDNVSGGDIFGQVVENNLIIHKIMVPPKEMGTIVEIAPAGEYTLDHALLTIEFDGKRKQLTMVHNWPVRSARPVIEKLPCNYPLLTGQRVLDSLFPCVQGGTCAIPGAFGCGKTVISQSLSKFSNSDAIVYVGCGERGNEMAEVLMEFPELHTKVGDKEEPIMQRTCLVANTSNMPVAAREASIYTGITLAEYFRDMGLNVAMMADSTSRWAEALREISGRLAEMPADSGYPAYLGARLASFYERAGRVSCIGHPTRIGSVTIVGAVSPPGGDFADPVTAATLGIVQVFWGLDKKLAQRKHFPSINWLISFSKYMQALDTHYDQMDPEFVPLRTRAKEILQMEEDLSEIVQLVGQDSLGESEKITIEVARIIRDDFLQQNGFSPYDKCCPFFKTVWMLKNMMTFYNLAQKAVESSTADNKVTWNQIKNELKEIIHRITSMKFQDPTDGEQTLTAHFSTLNEDIITAFRNFSDLV.

ATP is bound at residue 251 to 258; the sequence is GAFGCGKT.

This sequence belongs to the ATPase alpha/beta chains family. V-ATPase is a heteromultimeric enzyme composed of a peripheral catalytic V1 complex (main components: subunits A, B, C, D, E, and F) attached to an integral membrane V0 proton pore complex (main component: the proteolipid protein).

The catalysed reaction is ATP + H2O + 4 H(+)(in) = ADP + phosphate + 5 H(+)(out). Its function is as follows. Catalytic subunit of the peripheral V1 complex of vacuolar ATPase. V-ATPase vacuolar ATPase is responsible for acidifying a variety of intracellular compartments in eukaryotic cells. This is V-type proton ATPase catalytic subunit A (vatA) from Dictyostelium discoideum (Social amoeba).